The following is a 314-amino-acid chain: tRNA dimethylallyltransferase (314 aa).

Position 13–20 (13–20 (GPTASGKS)) interacts with ATP. Substrate is bound at residue 15–20 (TASGKS). Interaction with substrate tRNA stretches follow at residues 38–41 (DSMQ) and 161–165 (QRIAR).

The protein belongs to the IPP transferase family. Monomer. The cofactor is Mg(2+).

The catalysed reaction is adenosine(37) in tRNA + dimethylallyl diphosphate = N(6)-dimethylallyladenosine(37) in tRNA + diphosphate. Functionally, catalyzes the transfer of a dimethylallyl group onto the adenine at position 37 in tRNAs that read codons beginning with uridine, leading to the formation of N6-(dimethylallyl)adenosine (i(6)A). This Parvibaculum lavamentivorans (strain DS-1 / DSM 13023 / NCIMB 13966) protein is tRNA dimethylallyltransferase.